A 267-amino-acid chain; its full sequence is Trehalose 2-sulfotransferase (267 aa).

Residues Gln-14, 33–39 (EPQEFFQ), Pro-48, and Trp-53 each bind alpha,alpha-trehalose. The active-site Proton acceptor is the Glu-36.

It belongs to the Stf0 sulfotransferase family. In terms of assembly, homodimer.

It catalyses the reaction alpha,alpha-trehalose + 3'-phosphoadenylyl sulfate = 2-O-sulfo-alpha,alpha-trehalose + adenosine 3',5'-bisphosphate + H(+). It participates in glycolipid metabolism. In terms of biological role, catalyzes the sulfuryl group transfer from 3'-phosphoadenosine-5'-phosphosulfate (PAPS) to trehalose, leading to trehalose-2-sulfate (T2S). The sulfation of trehalose is the first step in the biosynthesis of sulfolipid-1 (SL-1), a major cell wall glycolipid and the most abundant sulfated metabolite found in Mycobacterium tuberculosis, that is a potential virulence factor thought to mediate host-pathogen interactions. In Mycobacterium tuberculosis (strain ATCC 35801 / TMC 107 / Erdman), this protein is Trehalose 2-sulfotransferase.